We begin with the raw amino-acid sequence, 54 residues long: Small ribosomal subunit protein uS14 (54 aa).

Zn(2+) is bound by residues C19, C22, C37, and C40.

Belongs to the universal ribosomal protein uS14 family. Zinc-binding uS14 subfamily. Part of the 30S ribosomal subunit. The cofactor is Zn(2+).

Its function is as follows. Binds 16S rRNA, required for the assembly of 30S particles. This is Small ribosomal subunit protein uS14 from Sulfurisphaera tokodaii (strain DSM 16993 / JCM 10545 / NBRC 100140 / 7) (Sulfolobus tokodaii).